We begin with the raw amino-acid sequence, 166 residues long: Holin-like protein TcdE (166 aa).

The next 4 membrane-spanning stretches (helical) occupy residues 15 to 35 (IFFY…LSEH), 36 to 56 (IFIK…CLSA), 77 to 97 (MIAC…NFLF), and 111 to 131 (HLGI…VSIL).

It belongs to the bacteriophage holin family. As to quaternary structure, homomultimer.

The protein localises to the cell membrane. Its function is as follows. Holin-like protein required for secretion of toxins A and B (TcdA and TcdB). Facilitates the release of toxins to the extracellular environment without causing the bacterial cell lysis. Has weak activity, suggesting that it may act as a antiholin when multiple forms are produced. The chain is Holin-like protein TcdE from Clostridioides difficile (Peptoclostridium difficile).